Consider the following 341-residue polypeptide: Cell division protein FtsQ (341 aa).

Topologically, residues 1–126 (MTETDEGAPV…VARGVVRGLK (126 aa)) are cytoplasmic. The helical transmembrane segment at 127-147 (TLFATVMFSIAGFGLGLALYV) threads the bilayer. Topologically, residues 148-341 (TPAMSVRNIV…VSSPDLPTVK (194 aa)) are extracellular. The POTRA domain occupies 151 to 219 (MSVRNIVVTG…SALRITIVER (69 aa)).

This sequence belongs to the FtsQ/DivIB family. FtsQ subfamily.

The protein resides in the cell membrane. Its function is as follows. Essential cell division protein. This chain is Cell division protein FtsQ, found in Mycobacterium leprae (strain Br4923).